Reading from the N-terminus, the 253-residue chain is MICOS complex subunit mic25-b (253 aa).

A lipid anchor (N-myristoyl glycine) is attached at G2. The interval 38–82 (KDQSTWAASGAASGSATVPSKVGSSASHPAAASKDGAHKPTAAGV) is disordered. Residues 44–53 (AASGAASGSA) show a composition bias toward low complexity. A coiled-coil region spans residues 87–116 (AEEDLYRRYEREQTLIQEELARLAKREKDA). The CHCH domain maps to 206–248 (DPVCMDLQSNILKCYAENKQERLNCSDLAKEYQKCVSAAQKNL). Short sequence motifs (cx9C motif) lie at residues 209–219 (CMDLQSNILKC) and 230–240 (CSDLAKEYQKC). Disulfide bonds link C209–C240 and C219–C230.

It belongs to the MICOS complex subunit Mic19 family. Metazoan Mic25 subfamily. Component of the mitochondrial contact site and cristae organizing system (MICOS) complex (also known as MINOS or MitOS complex).

It is found in the mitochondrion inner membrane. In terms of biological role, component of the MICOS complex, a large protein complex of the mitochondrial inner membrane that plays crucial roles in the maintenance of crista junctions, inner membrane architecture, and formation of contact sites to the outer membrane. This is MICOS complex subunit mic25-b (chchd6-b) from Xenopus laevis (African clawed frog).